The sequence spans 393 residues: Elongation factor Tu (393 aa).

Positions 6 to 204 constitute a tr-type G domain; that stretch reads KPHINVGTIG…ALEKIELPVR (199 aa). The segment at 15-22 is G1; it reads GHVDHGKT. A GTP-binding site is contributed by 15-22; sequence GHVDHGKT. Threonine 22 lines the Mg(2+) pocket. The tract at residues 58-62 is G2; that stretch reads GITIS. The interval 79 to 82 is G3; it reads DCPG. GTP contacts are provided by residues 79–83 and 134–137; these read DCPGH and NKCD. Residues 134 to 137 form a G4 region; sequence NKCD. The G5 stretch occupies residues 172-174; it reads SAV.

It belongs to the TRAFAC class translation factor GTPase superfamily. Classic translation factor GTPase family. EF-Tu/EF-1A subfamily. Monomer.

The protein localises to the cytoplasm. It catalyses the reaction GTP + H2O = GDP + phosphate + H(+). Its function is as follows. GTP hydrolase that promotes the GTP-dependent binding of aminoacyl-tRNA to the A-site of ribosomes during protein biosynthesis. In Anaplasma marginale (strain St. Maries), this protein is Elongation factor Tu.